Consider the following 357-residue polypeptide: Arginine kinase (357 aa).

The 83-residue stretch at 9 to 91 (KLEAGFKKLQ…FNPIIEDYHE (83 aa)) folds into the Phosphagen kinase N-terminal domain. 64–66 (GVG) serves as a coordination point for L-arginine. The 238-residue stretch at 119 to 356 (YVVSTHVRCG…LEMIKMEEAA (238 aa)) folds into the Phosphagen kinase C-terminal domain. ATP-binding positions include 122-126 (STHVR) and His185. Glu225 is a binding site for L-arginine. Arg229 contacts ATP. Cys271 serves as a coordination point for L-arginine. ATP-binding positions include 280–284 (RASVH) and 309–314 (RGTRGE).

Belongs to the ATP:guanido phosphotransferase family.

It carries out the reaction L-arginine + ATP = N(omega)-phospho-L-arginine + ADP + H(+). Catalyzes the reversible transfer of high energy ATP gamma-phosphate group to L-arginine. This chain is Arginine kinase, found in Polybetes pythagoricus (South American huntsman spider).